The following is a 146-amino-acid chain: Tol-Pal system protein TolR (146 aa).

Residues 16-36 form a helical membrane-spanning segment; it reads VVPYIDVMLVLLVIFMVTAPM.

Belongs to the ExbD/TolR family. The Tol-Pal system is composed of five core proteins: the inner membrane proteins TolA, TolQ and TolR, the periplasmic protein TolB and the outer membrane protein Pal. They form a network linking the inner and outer membranes and the peptidoglycan layer.

It is found in the cell inner membrane. Its function is as follows. Part of the Tol-Pal system, which plays a role in outer membrane invagination during cell division and is important for maintaining outer membrane integrity. The polypeptide is Tol-Pal system protein TolR (Pseudomonas aeruginosa (strain ATCC 15692 / DSM 22644 / CIP 104116 / JCM 14847 / LMG 12228 / 1C / PRS 101 / PAO1)).